The chain runs to 155 residues: Calmodulin, flagellar (155 aa).

4 consecutive EF-hand domains span residues 14–49, 50–85, 87–122, and 123–155; these read EQIAEFKEAFSLFDKDGDGTITTSELGTVMRSLGQN, PTEAELHDMINEVDADGNGTIDFTEFLTMMAKKMKD, DNEEEIKEAFKVFDKDGNGFISAQELRHVMCNLGEK, and LTDEEVDEMIREADIDGDNQINYTEFVKMMMQK. 19 residues coordinate Ca(2+): Asp-27, Asp-29, Asp-31, Thr-33, Glu-38, Asp-63, Asp-65, Asn-67, Thr-69, Glu-74, Asp-100, Asp-102, Asn-104, Glu-111, Asp-136, Asp-138, Asp-140, Gln-142, and Glu-147.

The protein belongs to the calmodulin family.

It is found in the cell projection. Its subcellular location is the cilium. The protein localises to the flagellum. Its function is as follows. Calmodulin mediates the control of a large number of enzymes, ion channels and other proteins by Ca(2+). Among the enzymes to be stimulated by the calmodulin-Ca(2+) complex are a number of protein kinases and phosphatases. The chain is Calmodulin, flagellar (CAM1) from Naegleria gruberi (Amoeba).